A 265-amino-acid chain; its full sequence is Reduced viability upon starvation protein 161 (265 aa).

The 225-residue stretch at 15-239 (HSVIIKNVDK…LDQQSRDDYA (225 aa)) folds into the BAR domain. The stretch at 126–193 (YFKEIEEAIK…NQLKTELPQL (68 aa)) forms a coiled coil.

It localises to the cytoplasm. The protein resides in the cytoskeleton. In terms of biological role, component of a cytoskeletal structure that is required for the formation of endocytic vesicles at the plasma membrane level. The sequence is that of Reduced viability upon starvation protein 161 (RVS161) from Saccharomyces cerevisiae (strain ATCC 204508 / S288c) (Baker's yeast).